The following is a 205-amino-acid chain: Lymphotoxin-alpha (205 aa).

A signal peptide spans 1–34 (MTPPERLFLPRVRGTTLHLLLLGLLLVLLPGAQG). The O-linked (GalNAc...) threonine glycan is linked to Thr41. One can recognise a THD domain in the interval 63 to 205 (PAAHLIGDPS…STVFFGAFAL (143 aa)). A glycan (N-linked (GlcNAc...) asparagine) is linked at Asn96.

Belongs to the tumor necrosis factor family. In terms of assembly, homotrimer, and heterotrimer of either two LTB and one LTA subunits or (less prevalent) two LTA and one LTB subunits. Interacts with TNFRSF14.

The protein localises to the secreted. It is found in the membrane. Functionally, cytokine that in its homotrimeric form binds to TNFRSF1A/TNFR1, TNFRSF1B/TNFBR and TNFRSF14/HVEM. In its heterotrimeric form with LTB binds to TNFRSF3/LTBR. Lymphotoxin is produced by lymphocytes and is cytotoxic for a wide range of tumor cells in vitro and in vivo. The chain is Lymphotoxin-alpha (LTA) from Pan troglodytes (Chimpanzee).